Consider the following 332-residue polypeptide: Phenylalanine--tRNA ligase alpha subunit (332 aa).

Residue Glu252 participates in Mg(2+) binding.

This sequence belongs to the class-II aminoacyl-tRNA synthetase family. Phe-tRNA synthetase alpha subunit type 1 subfamily. Tetramer of two alpha and two beta subunits. Requires Mg(2+) as cofactor.

Its subcellular location is the cytoplasm. The catalysed reaction is tRNA(Phe) + L-phenylalanine + ATP = L-phenylalanyl-tRNA(Phe) + AMP + diphosphate + H(+). This is Phenylalanine--tRNA ligase alpha subunit from Marinobacter nauticus (strain ATCC 700491 / DSM 11845 / VT8) (Marinobacter aquaeolei).